A 2476-amino-acid polypeptide reads, in one-letter code: Zonadhesin (2476 aa).

Positions Met-1 to Ser-29 are cleaved as a signal peptide. Residues Phe-30–Arg-2418 lie on the Extracellular side of the membrane. MAM domains follow at residues Pro-31 to Glu-144 and Pro-147 to Gly-312. 2 N-linked (GlcNAc...) asparagine glycosylation sites follow: Asn-109 and Asn-269. 3 disordered regions span residues Pro-313–Val-332, Pro-358–Thr-462, and Glu-537–Ile-632. A 53 X approximate heptapeptide repeats (mucin-like domain) region spans residues Ser-319 to Ile-687. The segment covering Pro-358 to Thr-373 has biased composition (low complexity). Over residues Thr-400–Gly-412 the composition is skewed to pro residues. Positions His-423–Lys-433 are enriched in basic and acidic residues. Residues Pro-451–Thr-462 show a composition bias toward low complexity. The region spanning Cys-690–Cys-739 is the TIL 1 domain. N-linked (GlcNAc...) asparagine glycans are attached at residues Asn-735, Asn-758, and Asn-833. The VWFC 1 domain maps to Asp-740–His-794. Residues Ala-799–Glu-976 form the VWFD 1 domain. Disulfide bonds link Cys-801–Cys-936 and Cys-823–Cys-975. Residues Ser-943–Pro-983 form a disordered region. The TIL 2 domain occupies Cys-1070 to Cys-1123. The region spanning Gly-1124–Ala-1180 is the VWFC 2 domain. Asn-1154 is a glycosylation site (N-linked (GlcNAc...) asparagine). In terms of domain architecture, VWFD 2 spans Ala-1184 to Phe-1364. 2 disulfides stabilise this stretch: Cys-1186–Cys-1324 and Cys-1208–Cys-1363. Residues Asn-1329 and Asn-1448 are each glycosylated (N-linked (GlcNAc...) asparagine). Residues Cys-1456–Cys-1511 enclose the TIL 3 domain. A VWFC 3 domain is found at Gly-1512–Arg-1568. Residues Asn-1544, Asn-1596, and Asn-1654 are each glycosylated (N-linked (GlcNAc...) asparagine). Residues Gly-1573–Gln-1751 form the VWFD 3 domain. Intrachain disulfides connect Cys-1575-Cys-1712 and Cys-1597-Cys-1750. Residues Asp-1747–Ala-1759 are compositionally biased toward basic and acidic residues. Residues Asp-1747–Asn-1768 are disordered. Residue Asn-1843 is glycosylated (N-linked (GlcNAc...) asparagine). The 57-residue stretch at Cys-1851–Cys-1907 folds into the TIL 4 domain. Residues Gly-1908–Gln-1963 enclose the VWFC 4 domain. N-linked (GlcNAc...) asparagine glycosylation occurs at Asn-1965. The 178-residue stretch at Asn-1968–Pro-2145 folds into the VWFD 4 domain. A disulfide bridge links Cys-1970 with Cys-2107. N-linked (GlcNAc...) asparagine glycans are attached at residues Asn-2122, Asn-2165, and Asn-2178. Residues Cys-2257 to Cys-2310 enclose the TIL 5 domain. One can recognise a VWFC 5 domain in the interval Gly-2311–Phe-2365. N-linked (GlcNAc...) asparagine glycosylation is found at Asn-2329 and Asn-2359. Positions Arg-2366 to Thr-2402 constitute an EGF-like domain. 3 cysteine pairs are disulfide-bonded: Cys-2370–Cys-2381, Cys-2375–Cys-2390, and Cys-2392–Cys-2401. A helical transmembrane segment spans residues Val-2419 to Val-2439. The tract at residues Arg-2438–Ala-2476 is disordered. Residues Val-2439–Ser-2450 show a composition bias toward basic residues. At Ser-2440–Ala-2476 the chain is on the cytoplasmic side.

Probably forms covalent oligomers. The MAM domains and the mucin-like domains are missing from the zonadhesin that binds to the egg extracellular matrix. Processing might occur during sperm maturation and/or capacitation. As to expression, in testis, primarily in haploid spermatids. Not in lung, liver, heart, spleen, brain, kidney, epididymis.

It is found in the cell membrane. Its function is as follows. Binds in a species-specific manner to the zona pellucida of the egg. May be involved in gamete recognition and/or signaling. The protein is Zonadhesin (ZAN) of Sus scrofa (Pig).